A 119-amino-acid polypeptide reads, in one-letter code: Translation initiation factor 1A (119 aa).

A disordered region spans residues 1–24 (MSEDDVDNSVKDFESGEENEESIG). One can recognise an S1-like domain in the interval 24–98 (GRVILPNKKK…EKADVVYRYT (75 aa)).

This sequence belongs to the eIF-1A family.

Functionally, seems to be required for maximal rate of protein biosynthesis. Enhances ribosome dissociation into subunits and stabilizes the binding of the initiator Met-tRNA(I) to 40 S ribosomal subunits. In Thermoplasma acidophilum (strain ATCC 25905 / DSM 1728 / JCM 9062 / NBRC 15155 / AMRC-C165), this protein is Translation initiation factor 1A (eIF1A).